Here is a 198-residue protein sequence, read N- to C-terminus: Large ribosomal subunit protein bL25 (198 aa).

The protein belongs to the bacterial ribosomal protein bL25 family. CTC subfamily. Part of the 50S ribosomal subunit; part of the 5S rRNA/L5/L18/L25 subcomplex. Contacts the 5S rRNA. Binds to the 5S rRNA independently of L5 and L18.

Functionally, this is one of the proteins that binds to the 5S RNA in the ribosome where it forms part of the central protuberance. This Pseudomonas putida (strain W619) protein is Large ribosomal subunit protein bL25.